The sequence spans 410 residues: Ribose 1,5-bisphosphate phosphokinase PhnN (410 aa).

Residues 1–220 are unknown; the sequence is MRYAVYLAPP…VWLLMAGSTS (220 aa). Residues 221 to 410 form a ribose 1,5-bisphosphokinase region; that stretch reads MRTETGQLIY…SHCHQPITAL (190 aa). 233 to 240 is a binding site for ATP; it reads GPSGAGKD.

The protein in the C-terminal section; belongs to the ribose 1,5-bisphosphokinase family.

The enzyme catalyses alpha-D-ribose 1,5-bisphosphate + ATP = 5-phospho-alpha-D-ribose 1-diphosphate + ADP. The protein operates within metabolic intermediate biosynthesis; 5-phospho-alpha-D-ribose 1-diphosphate biosynthesis; 5-phospho-alpha-D-ribose 1-diphosphate from D-ribose 5-phosphate (route II): step 3/3. Functionally, catalyzes the phosphorylation of ribose 1,5-bisphosphate to 5-phospho-D-ribosyl alpha-1-diphosphate (PRPP). This chain is Ribose 1,5-bisphosphate phosphokinase PhnN (phnN), found in Laribacter hongkongensis (strain HLHK9).